Consider the following 173-residue polypeptide: bZIP transcription factor 44 (173 aa).

A disordered region spans residues 1-65 (MNNKTEMGSS…SRMRKQKHLD (65 aa)). Over residues 8–22 (GSSTSGNCSSVSTTG) the composition is skewed to low complexity. The segment covering 30–41 (SDLRQRDLIDER) has biased composition (basic and acidic residues). In terms of domain architecture, bZIP spans 39–102 (DERKRKRKQS…VTIEAENDIL (64 aa)). The tract at residues 41-62 (RKRKRKQSNRESARRSRMRKQK) is basic motif. A leucine-zipper region spans residues 67–81 (LTAQVTHLRKENAQI).

Forms heterodimers with BZIP1, BZIP9, BZIP10, BZIP25 and BZIP63. As to expression, expressed in the micropylar endosperm and radicle tip in early germinating seeds.

It localises to the nucleus. Transcription factor that binds to the DNA G-box motif 5'-CACGTG-3' of MAN7 promoter. Involved in the positive regulation of seed germination through MAN7 gene activation. MAN7 is required for both, loosening of the micropylar endosperm, and rupture of the seed coat in germinating seeds. The polypeptide is bZIP transcription factor 44 (Arabidopsis thaliana (Mouse-ear cress)).